The chain runs to 543 residues: Chaperonin GroEL (543 aa).

ATP contacts are provided by residues 29 to 32 (TLGP), 86 to 90 (DGTTT), Gly-413, 476 to 478 (NAA), and Asp-492.

It belongs to the chaperonin (HSP60) family. As to quaternary structure, forms a cylinder of 14 subunits composed of two heptameric rings stacked back-to-back. Interacts with the co-chaperonin GroES.

It is found in the cytoplasm. The enzyme catalyses ATP + H2O + a folded polypeptide = ADP + phosphate + an unfolded polypeptide.. In terms of biological role, together with its co-chaperonin GroES, plays an essential role in assisting protein folding. The GroEL-GroES system forms a nano-cage that allows encapsulation of the non-native substrate proteins and provides a physical environment optimized to promote and accelerate protein folding. The sequence is that of Chaperonin GroEL from Brevibacillus choshinensis.